The chain runs to 472 residues: Membrane-bound lytic murein transglycosylase F (472 aa).

The signal sequence occupies residues Met1 to Ala24. The interval Asp25–Ala259 is non-LT domain. The tract at residues Asp260–Glu472 is LT domain. Glu306 is a catalytic residue.

This sequence in the N-terminal section; belongs to the bacterial solute-binding protein 3 family. In the C-terminal section; belongs to the transglycosylase Slt family.

It localises to the cell outer membrane. The enzyme catalyses Exolytic cleavage of the (1-&gt;4)-beta-glycosidic linkage between N-acetylmuramic acid (MurNAc) and N-acetylglucosamine (GlcNAc) residues in peptidoglycan, from either the reducing or the non-reducing ends of the peptidoglycan chains, with concomitant formation of a 1,6-anhydrobond in the MurNAc residue.. In terms of biological role, murein-degrading enzyme that degrades murein glycan strands and insoluble, high-molecular weight murein sacculi, with the concomitant formation of a 1,6-anhydromuramoyl product. Lytic transglycosylases (LTs) play an integral role in the metabolism of the peptidoglycan (PG) sacculus. Their lytic action creates space within the PG sacculus to allow for its expansion as well as for the insertion of various structures such as secretion systems and flagella. In Methylobacillus flagellatus (strain ATCC 51484 / DSM 6875 / VKM B-1610 / KT), this protein is Membrane-bound lytic murein transglycosylase F.